Here is a 515-residue protein sequence, read N- to C-terminus: Phospholipase A1-Igamma1, chloroplastic (515 aa).

A chloroplast-targeting transit peptide spans 1–44 (MATIPSHNLRPHTTNQRTQYSLSFRPHFSRSTLITFPARSSPAR). A GXSXG motif is present at residues 301–305 (GHSLG). Ser303 acts as the Acyl-ester intermediate in catalysis. Active-site charge relay system residues include Asp366 and His422.

This sequence belongs to the AB hydrolase superfamily. Lipase family. Ubiquitous. Highly expressed in leaves.

The protein resides in the plastid. It is found in the chloroplast. The catalysed reaction is 1,2-dihexadecanoyl-sn-glycero-3-phosphocholine + H2O = 2-hexadecanoyl-sn-glycero-3-phosphocholine + hexadecanoate + H(+). It catalyses the reaction a 1,2-diacyl-3-O-(beta-D-galactosyl)-sn-glycerol + H2O = an acyl-3-O-(beta-D-galactosyl)-sn-glycerol + a fatty acid + H(+). It carries out the reaction a 1,2-diacyl-3-O-[alpha-D-galactosyl-(1-&gt;6)-beta-D-galactosyl]-sn-glycerol + H2O = acyl-3-O-[alpha-D-galactosyl-(1-&gt;6)-beta-D-galactosyl]-sn-glycerol + a fatty acid + H(+). Acylhydrolase with a broad specificity. Catalyzes the hydrolysis of phosphatidylcholine at the sn-1 position. Moderate activity toward phosphatidylcholine (PC), monogalactosyldiacylglycerol (MGDG), digalactosyldiacylglycerol (DGDG) and triacylglycerol (TAG). May display dual sn-1/sn-2 substrate specificity. Could be involved in early wound response. This Arabidopsis thaliana (Mouse-ear cress) protein is Phospholipase A1-Igamma1, chloroplastic.